Reading from the N-terminus, the 432-residue chain is Pentatricopeptide repeat-containing protein 2, mitochondrial (432 aa).

Residues 1–33 constitute a mitochondrion transit peptide; the sequence is MQFIKRTFPRRAFVDLLLNRFCLREFATTYSVS. PPR repeat units lie at residues 108–142, 143–179, 360–394, and 395–429; these read KTVAYNLVLQYHLAKGHYNAAWSLYNDMKKRQQKP, SDHTYSILLKGFCDAIEKNKQGNFSKLREYSEKVTAS, NLQVYHEKLRNLVQQGQAAECLNTIKRMSHNGPFP, and TQQTFLIVLSLCKRPKFYSYTKSFLDLAKKLNVPV.

It is found in the mitochondrion. In terms of biological role, mitochondrial RNA-binding protein that acts as a general translation factor. Plays a critical role in the synthesis of all mitochondrial DNA-encoded oxidative phosphorylation subunits, which are essential for mitochondrial respiration. Essential for the expression of iron-sulfur cluster (ISC) proteins as well as other heme proteins related to iron-sensing, and thus plays a key role in iron homeostasis. This chain is Pentatricopeptide repeat-containing protein 2, mitochondrial, found in Schizosaccharomyces pombe (strain 972 / ATCC 24843) (Fission yeast).